The sequence spans 502 residues: Protein O-glucosyltransferase 2 (502 aa).

The N-terminal stretch at 1–19 (MFGTLLLYCFFLATVPALA) is a signal peptide. The stretch at 24–130 (ERQLSPEKSE…VAKSPYILKG (107 aa)) is one Filamin repeat. Residues asparagine 302 and asparagine 414 are each glycosylated (N-linked (GlcNAc...) asparagine). The short motif at 499 to 502 (KDEL) is the Prevents secretion from ER element.

Belongs to the KDELC family. N-glycosylated.

It is found in the endoplasmic reticulum lumen. The catalysed reaction is L-seryl-[EGF-like domain protein] + UDP-alpha-D-glucose = 3-O-(beta-D-glucosyl)-L-seryl-[EGF-like domain protein] + UDP + H(+). It catalyses the reaction L-seryl-[EGF-like domain protein] + UDP-alpha-D-xylose = 3-O-(beta-D-xylosyl)-L-seryl-[EGF-like domain protein] + UDP + H(+). The protein operates within protein modification; protein glycosylation. Its function is as follows. Protein glucosyltransferase that catalyzes the transfer of glucose from UDP-glucose to a serine residue within the consensus sequence peptide C-X-N-T-X-G-S-F-X-C. Can also catalyze the transfer of xylose from UDP-xylose but less efficiently. Specifically targets extracellular EGF repeats of proteins such as NOTCH1, NOTCH3, FBN1, FBN2 and LTBP1. May regulate the transport of NOTCH1 and NOTCH3 to the plasma membrane and thereby the Notch signaling pathway. In Homo sapiens (Human), this protein is Protein O-glucosyltransferase 2.